The following is a 317-amino-acid chain: tRNA dimethylallyltransferase (317 aa).

An ATP-binding site is contributed by 14–21; it reads GPTASGKS. Substrate is bound at residue 16–21; it reads TASGKS. Interaction with substrate tRNA regions lie at residues 39 to 42 and 163 to 167; these read DSVL and QRIQR.

This sequence belongs to the IPP transferase family. In terms of assembly, monomer. The cofactor is Mg(2+).

It catalyses the reaction adenosine(37) in tRNA + dimethylallyl diphosphate = N(6)-dimethylallyladenosine(37) in tRNA + diphosphate. Functionally, catalyzes the transfer of a dimethylallyl group onto the adenine at position 37 in tRNAs that read codons beginning with uridine, leading to the formation of N6-(dimethylallyl)adenosine (i(6)A). This chain is tRNA dimethylallyltransferase, found in Xylella fastidiosa (strain M12).